Here is a 327-residue protein sequence, read N- to C-terminus: E3 ubiquitin-protein ligase ZNRF4 (327 aa).

The N-terminal stretch at M1–A28 is a signal peptide. The Lumenal portion of the chain corresponds to Q29 to P150. N31 carries N-linked (GlcNAc...) asparagine glycosylation. The helical transmembrane segment at V151–V171 threads the bilayer. Residues L172–S327 lie on the Cytoplasmic side of the membrane. The RING-type; atypical zinc-finger motif lies at C209–K252. Positions A256–G265 are enriched in polar residues. Residues A256–P279 form a disordered region.

As to quaternary structure, interacts with CANX. As to expression, expressed exclusively in spermatids (at protein level).

The protein resides in the endoplasmic reticulum membrane. The enzyme catalyses S-ubiquitinyl-[E2 ubiquitin-conjugating enzyme]-L-cysteine + [acceptor protein]-L-lysine = [E2 ubiquitin-conjugating enzyme]-L-cysteine + N(6)-ubiquitinyl-[acceptor protein]-L-lysine.. It functions in the pathway protein modification; protein ubiquitination. Functionally, E3 ubiquitin-protein ligase that acts as a negative regulator of NOD2 signaling by mediating ubiquitination and degradation of RIPK2. Also catalyzes ubiquitination and proteasomal degradation of CANX within the endoplasmic reticulum. Could have a role in spermatogenesis. This is E3 ubiquitin-protein ligase ZNRF4 from Mus musculus (Mouse).